The chain runs to 288 residues: Proteasome subunit beta (288 aa).

A propeptide spans 1-57 (MTVDGQVGRWPVSAIPAAYMRPGSGSFTEFLAGAEPHLLPGRAGAQPAGAAPAVPHG) (removed in mature form; by autocatalysis). Thr58 acts as the Nucleophile in catalysis.

Belongs to the peptidase T1B family. As to quaternary structure, the 20S proteasome core is composed of 14 alpha and 14 beta subunits that assemble into four stacked heptameric rings, resulting in a barrel-shaped structure. The two inner rings, each composed of seven catalytic beta subunits, are sandwiched by two outer rings, each composed of seven alpha subunits. The catalytic chamber with the active sites is on the inside of the barrel. Has a gated structure, the ends of the cylinder being occluded by the N-termini of the alpha-subunits. Is capped by the proteasome-associated ATPase, ARC.

Its subcellular location is the cytoplasm. The enzyme catalyses Cleavage of peptide bonds with very broad specificity.. The protein operates within protein degradation; proteasomal Pup-dependent pathway. With respect to regulation, the formation of the proteasomal ATPase ARC-20S proteasome complex, likely via the docking of the C-termini of ARC into the intersubunit pockets in the alpha-rings, may trigger opening of the gate for substrate entry. Interconversion between the open-gate and close-gate conformations leads to a dynamic regulation of the 20S proteasome proteolysis activity. Component of the proteasome core, a large protease complex with broad specificity involved in protein degradation. This is Proteasome subunit beta from Nakamurella multipartita (strain ATCC 700099 / DSM 44233 / CIP 104796 / JCM 9543 / NBRC 105858 / Y-104) (Microsphaera multipartita).